Reading from the N-terminus, the 399-residue chain is Methylmalonic aciduria type A homolog, mitochondrial (399 aa).

The transit peptide at 1 to 15 (MVVRSLLRVSRLTSA) directs the protein to the mitochondrion. GTP is bound by residues 131-139 (GSPGVGKSS), Asp274, and 310-312 (SIM).

This sequence belongs to the SIMIBI class G3E GTPase family. ArgK/MeaB subfamily.

It is found in the mitochondrion. Its function is as follows. May have GTPase activity. May also bind and hydrolyze ATP. May function as chaperone. Likely to have a role in propionyl-CoA and adenosylcobalamin metabolism. The protein is Methylmalonic aciduria type A homolog, mitochondrial (mmaa-1) of Caenorhabditis elegans.